Consider the following 179-residue polypeptide: Interleukin-22b (179 aa).

Residues M1–A33 form the signal peptide. Cystine bridges form between C40–C132 and C89–C178. N-linked (GlcNAc...) asparagine glycosylation is found at N54, N68, and N97.

The protein belongs to the IL-10 family.

It is found in the secreted. Its function is as follows. Cytokine that contributes to the inflammatory response in vivo. This Mus musculus (Mouse) protein is Interleukin-22b.